Here is a 216-residue protein sequence, read N- to C-terminus: Probable GTP-binding protein EngB (216 aa).

An EngB-type G domain is found at 43 to 216; that stretch reads DRIEVCFAGR…TLRSIIAHLD (174 aa). GTP contacts are provided by residues 51–58, 78–82, 96–99, 163–166, and 197–199; these read GRSNVGKS, GRTQE, DLPG, TKAD, and TSS. Residues S58 and T80 each coordinate Mg(2+).

The protein belongs to the TRAFAC class TrmE-Era-EngA-EngB-Septin-like GTPase superfamily. EngB GTPase family. Mg(2+) is required as a cofactor.

Its function is as follows. Necessary for normal cell division and for the maintenance of normal septation. The chain is Probable GTP-binding protein EngB from Ruegeria sp. (strain TM1040) (Silicibacter sp.).